Reading from the N-terminus, the 320-residue chain is rRNA methyltransferase 2, mitochondrial (320 aa).

The transit peptide at 1 to 18 directs the protein to the mitochondrion; the sequence is MILVYNRIRSIISSSLGR. S-adenosyl-L-methionine-binding positions include 83–86, D104, 178–179, and D203; these read PGAW and DI. Residue K264 is the Proton acceptor of the active site.

Belongs to the class I-like SAM-binding methyltransferase superfamily. RNA methyltransferase RlmE family.

It localises to the mitochondrion. It catalyses the reaction uridine(2791) in 21S rRNA + S-adenosyl-L-methionine = 2'-O-methyluridine(2791) in 21S rRNA + S-adenosyl-L-homocysteine + H(+). In terms of biological role, S-adenosyl-L-methionine-dependent 2'-O-ribose methyltransferase that catalyzes the formation of 2'-O-methyluridine at position 2791 (Um2791) in the 21S mitochondrial large subunit ribosomal RNA (mtLSU rRNA), a universally conserved modification in the peptidyl transferase domain of the mtLSU rRNA. The sequence is that of rRNA methyltransferase 2, mitochondrial from Saccharomyces cerevisiae (strain ATCC 204508 / S288c) (Baker's yeast).